The following is a 581-amino-acid chain: Chaotic nuclear migration protein 67 (581 aa).

A phosphoserine mark is found at Ser17, Ser20, Ser72, Ser85, and Ser89. The segment at Tyr86–Ile150 is disordered. Over residues Glu94–Val114 the composition is skewed to basic and acidic residues. Ser151 is modified (phosphoserine). Coiled coils occupy residues Leu179–Gln252, Phe306–Gln363, and Lys373–Glu451.

As to quaternary structure, interacts directly with ADY3 and YOR129C. Interacts with ADY4. Probable component of a SPB complex composed of ADY3, SSP1, DON1, MPC54, SPO21/MPC70, NUD1 and CNM67. Phosphorylated in its N-terminal part.

The protein resides in the cytoplasm. It is found in the cytoskeleton. Its subcellular location is the microtubule organizing center. It localises to the spindle pole body. Involved in the pathway that organizes the shaping and sizing of the prospore membrane (PSM) during sporulation. Required for the proper formation of the spindle pole body (SPB) outer plaque. May connect the outer plaque to the central plaque embedded in the nuclear envelope. In Saccharomyces cerevisiae (strain ATCC 204508 / S288c) (Baker's yeast), this protein is Chaotic nuclear migration protein 67 (CNM67).